A 252-amino-acid chain; its full sequence is DNA-(apurinic or apyrimidinic site) lyase Nei2 (252 aa).

Pro2 (schiff-base intermediate with DNA) is an active-site residue. The Proton donor role is filled by Glu3. The active-site Proton donor (in beta-elimination) is the Lys51. The segment at 216-250 (WVYGRAGEPCRRCGTLIQTDRGGERVTYWCPVCQT) adopts an FPG-type zinc-finger fold. Zn(2+)-binding residues include Cys225, Cys228, Cys245, and Cys248.

Belongs to the FPG family. Monomer. The cofactor is Zn(2+).

It catalyses the reaction 2'-deoxyribonucleotide-(2'-deoxyribose 5'-phosphate)-2'-deoxyribonucleotide-DNA = a 3'-end 2'-deoxyribonucleotide-(2,3-dehydro-2,3-deoxyribose 5'-phosphate)-DNA + a 5'-end 5'-phospho-2'-deoxyribonucleoside-DNA + H(+). Its function is as follows. Involved in base excision repair of DNA damaged by oxidation or by mutagenic agents. Acts as DNA glycosylase that recognizes and removes damaged bases. In terms of biological role, involved in the repair of psoralen-UVA DNA cross-links. A lyase that cleaves single-stranded (ss)DNA but not double-stranded (ds)DNA with an abasic site. Has 5-hydroxyuracil (5-OH-U) glycosylase activity on ssDNA with 5-OH-U, with 10-fold less activity on dsDNA, but weak to no uracil glycosylase activity. Has weak glycosylase activity on thymine glycol and dihydrothymine residues in ssDNA. Cleaves the DNA backbone by beta-delta elimination to generate a single-strand break at the site of the removed base with both 3'- and 5'-phosphates. The chain is DNA-(apurinic or apyrimidinic site) lyase Nei2 from Mycolicibacterium smegmatis (strain ATCC 700084 / mc(2)155) (Mycobacterium smegmatis).